A 316-amino-acid polypeptide reads, in one-letter code: Annexin A13 (316 aa).

The N-myristoyl glycine moiety is linked to residue Gly-2. Annexin repeat units lie at residues 14 to 85 (FDVD…ALLD), 86 to 157 (RPSE…SLLQ), 169 to 241 (DLAG…TLVR), and 245 to 316 (DQEG…ALLH).

Belongs to the annexin family. In terms of assembly, monomer and homodimer. As to expression, detected in intestine, and at much lower levels also in kidney (at protein level).

The protein resides in the apical cell membrane. The protein localises to the cell membrane. It is found in the cytoplasmic vesicle. Its function is as follows. Binds to membranes enriched in phosphatidylserine or phosphatidylglycerol in a calcium-dependent manner. Half-maximal membrane binding requires about 60 uM calcium. Does not bind to membranes that lack phospholipids with an acidic headgroup. In terms of biological role, binds to membranes enriched in phosphatidylserine or phosphatidylglycerol in a calcium-dependent manner, but requires higher calcium levels for membrane binding than isoform A. Half-maximal membrane binding requires about 320 uM calcium. May play a role in vesicular traffic to the apical plasma membrane. The sequence is that of Annexin A13 (ANXA13) from Canis lupus familiaris (Dog).